The primary structure comprises 91 residues: UPF0250 protein HCH_05838 (91 aa).

This sequence belongs to the UPF0250 family.

The chain is UPF0250 protein HCH_05838 from Hahella chejuensis (strain KCTC 2396).